Here is a 429-residue protein sequence, read N- to C-terminus: Histidinol dehydrogenase (429 aa).

Residues Y127, Q188, and N211 each contribute to the NAD(+) site. Substrate is bound by residues S234, Q256, and H259. 2 residues coordinate Zn(2+): Q256 and H259. Residues E324 and H325 each act as proton acceptor in the active site. Substrate contacts are provided by H325, D358, E412, and H417. D358 provides a ligand contact to Zn(2+). Zn(2+) is bound at residue H417.

The protein belongs to the histidinol dehydrogenase family. Requires Zn(2+) as cofactor.

It catalyses the reaction L-histidinol + 2 NAD(+) + H2O = L-histidine + 2 NADH + 3 H(+). The protein operates within amino-acid biosynthesis; L-histidine biosynthesis; L-histidine from 5-phospho-alpha-D-ribose 1-diphosphate: step 9/9. Its function is as follows. Catalyzes the sequential NAD-dependent oxidations of L-histidinol to L-histidinaldehyde and then to L-histidine. The sequence is that of Histidinol dehydrogenase from Bacillus thuringiensis subsp. konkukian (strain 97-27).